A 268-amino-acid chain; its full sequence is MSWKMALQIPGGFWAAAVTVMLVMLSTPVAEARDFPKDFLVQFKGMCYFTNGTERVRGVARYIYNREEYGRFDSDVGEFQAVTELGRSIEDWNNYKDFLEQERAAVDKVCRHNYEAELRTTLQRQVEPTVTISPSRTEALNHHNLLVCSVTDFYPAQIKVRWFRNDQEETAGVVSTSLIRNGDWTFQILVMLEITPQRGDIYTCQVEHPSLQSPITVEWRAQSESAQSKMLSGIGGFVLGLIFLGLGLIIRHRGQKGPRGPPPAGLLH.

Residues 1 to 32 form the signal peptide; sequence MSWKMALQIPGGFWAAAVTVMLVMLSTPVAEA. The tract at residues 33-126 is beta-1; that stretch reads RDFPKDFLVQ…ELRTTLQRQV (94 aa). Topologically, residues 33–229 are extracellular; the sequence is RDFPKDFLVQ…RAQSESAQSK (197 aa). 2 disulfides stabilise this stretch: cysteine 47-cysteine 110 and cysteine 148-cysteine 204. An N-linked (GlcNAc...) asparagine glycan is attached at asparagine 51. Residues 127–229 are beta-2; the sequence is EPTVTISPSR…RAQSESAQSK (103 aa). The Ig-like C1-type domain occupies 128–216; it reads PTVTISPSRT…EHPSLQSPIT (89 aa). The helical transmembrane segment at 230-250 threads the bilayer; the sequence is MLSGIGGFVLGLIFLGLGLII. Topologically, residues 251–268 are cytoplasmic; the sequence is RHRGQKGPRGPPPAGLLH.

Belongs to the MHC class II family. In terms of assembly, heterodimer of an alpha and a beta subunit; also referred as MHC class II molecule. Dimer formation with HLA-DQA2, but not with HLA-DQA1, is required for efficient exit from the endoplasmic reticulum (ER). In the ER, forms a heterononamer; 3 MHC class II molecules bind to a CD74 homotrimer (also known as invariant chain or HLA class II histocompatibility antigen gamma chain). In the endosomal/lysosomal system; CD74 undergoes sequential degradation by various proteases; leaving a small fragment termed CLIP on each MHC class II molecule. MHC class II molecule interacts with HLA_DM, and HLA_DO in B-cells, in order to release CLIP and facilitate the binding of antigenic peptides. Association with HLA-DMA also occurs in skin Langerhans cells, in post-Golgi compartments. In terms of tissue distribution, restricted to skin Langerhans cells (at protein level).

It localises to the cell membrane. The protein localises to the endoplasmic reticulum membrane. The protein resides in the golgi apparatus. Its subcellular location is the trans-Golgi network membrane. It is found in the endosome membrane. It localises to the lysosome membrane. Functionally, binds peptides derived from antigens that access the endocytic route of antigen presenting cells (APC) and presents them on the cell surface for recognition by the CD4 T-cells. The peptide binding cleft accommodates peptides of 10-30 residues. The peptides presented by MHC class II molecules are generated mostly by degradation of proteins that access the endocytic route, where they are processed by lysosomal proteases and other hydrolases. Exogenous antigens that have been endocytosed by the APC are thus readily available for presentation via MHC II molecules, and for this reason this antigen presentation pathway is usually referred to as exogenous. As membrane proteins on their way to degradation in lysosomes as part of their normal turn-over are also contained in the endosomal/lysosomal compartments, exogenous antigens must compete with those derived from endogenous components. Autophagy is also a source of endogenous peptides, autophagosomes constitutively fuse with MHC class II loading compartments. In addition to APCs, other cells of the gastrointestinal tract, such as epithelial cells, express MHC class II molecules and CD74 and act as APCs, which is an unusual trait of the GI tract. To produce a MHC class II molecule that presents an antigen, three MHC class II molecules (heterodimers of an alpha and a beta chain) associate with a CD74 trimer in the ER to form a heterononamer. Soon after the entry of this complex into the endosomal/lysosomal system where antigen processing occurs, CD74 undergoes a sequential degradation by various proteases, including CTSS and CTSL, leaving a small fragment termed CLIP (class-II-associated invariant chain peptide). The removal of CLIP is facilitated by HLA-DM via direct binding to the alpha-beta-CLIP complex so that CLIP is released. HLA-DM stabilizes MHC class II molecules until primary high affinity antigenic peptides are bound. The MHC II molecule bound to a peptide is then transported to the cell membrane surface. In B-cells, the interaction between HLA-DM and MHC class II molecules is regulated by HLA-DO. Primary dendritic cells (DCs) also to express HLA-DO. Lysosomal microenvironment has been implicated in the regulation of antigen loading into MHC II molecules, increased acidification produces increased proteolysis and efficient peptide loading. The polypeptide is HLA class II histocompatibility antigen, DQ beta 2 chain (HLA-DQB2) (Homo sapiens (Human)).